Here is a 744-residue protein sequence, read N- to C-terminus: Potassium-transporting ATPase ATP-binding subunit (744 aa).

A run of 4 helical transmembrane segments spans residues 80–100 (PVMF…VMAL), 108–128 (AGFI…ANVA), 265–285 (LALT…TVTL), and 310–330 (VLVA…LSAI). The active-site 4-aspartylphosphate intermediate is Asp363. Residues Asp400, Glu404, 435–442 (FSAQTRMS), and Lys457 each bind ATP. Mg(2+) is bound by residues Asp580 and Asp584. Transmembrane regions (helical) follow at residues 650–670 (FAII…LNVM), 678–698 (AVMS…PLAL), and 724–744 (LLLP…MGWV).

Belongs to the cation transport ATPase (P-type) (TC 3.A.3) family. Type IA subfamily. The system is composed of three essential subunits: KdpA, KdpB and KdpC.

The protein localises to the cell inner membrane. It catalyses the reaction K(+)(out) + ATP + H2O = K(+)(in) + ADP + phosphate + H(+). In terms of biological role, part of the high-affinity ATP-driven potassium transport (or Kdp) system, which catalyzes the hydrolysis of ATP coupled with the electrogenic transport of potassium into the cytoplasm. This subunit is responsible for energy coupling to the transport system and for the release of the potassium ions to the cytoplasm. This is Potassium-transporting ATPase ATP-binding subunit from Ralstonia nicotianae (strain ATCC BAA-1114 / GMI1000) (Ralstonia solanacearum).